Reading from the N-terminus, the 110-residue chain is Protein RALF-like 19 (110 aa).

An N-terminal signal peptide occupies residues 1–23 (MGIKILLILGLLTLAVVAESANA). A propeptide spans 24–58 (TWTLTKSCVNGQGCIGEDGELDYLMDSETNRRQLA) (removed in mature form). Intrachain disulfides connect Cys76-Cys86 and Cys99-Cys105.

Belongs to the plant rapid alkalinization factor (RALF) family. In terms of processing, proteolytically cleaved, probably by S1P, a subtilisin-like serine protease (subtilase).

The protein resides in the secreted. Functionally, cell signaling peptide that may regulate plant stress, growth, and development. Mediates a rapid alkalinization of extracellular space by mediating a transient increase in the cytoplasmic Ca(2+) concentration leading to a calcium-dependent signaling events through a cell surface receptor and a concomitant activation of some intracellular mitogen-activated protein kinases. The protein is Protein RALF-like 19 (RALFL19) of Arabidopsis thaliana (Mouse-ear cress).